The primary structure comprises 254 residues: tRNA (guanine-N(7)-)-methyltransferase (254 aa).

S-adenosyl-L-methionine contacts are provided by glutamate 82, glutamate 107, aspartate 134, and aspartate 157. Residue aspartate 157 is part of the active site. Substrate contacts are provided by residues lysine 161, aspartate 193, and 233–236 (TKFE).

It belongs to the class I-like SAM-binding methyltransferase superfamily. TrmB family.

The catalysed reaction is guanosine(46) in tRNA + S-adenosyl-L-methionine = N(7)-methylguanosine(46) in tRNA + S-adenosyl-L-homocysteine. It functions in the pathway tRNA modification; N(7)-methylguanine-tRNA biosynthesis. Its function is as follows. Catalyzes the formation of N(7)-methylguanine at position 46 (m7G46) in tRNA. This chain is tRNA (guanine-N(7)-)-methyltransferase, found in Corynebacterium jeikeium (strain K411).